The sequence spans 434 residues: dTDP-D-glucose 4,6-dehydratase (434 aa).

Thr-134 contributes to the substrate binding site. Asp-135 functions as the Proton donor in the catalytic mechanism. Residues Glu-136 and Tyr-169 each act as proton acceptor in the active site. Over residues 286–309 (NNNNNNNNNNNNNNNNNNNNNNNN) the composition is skewed to low complexity. The segment at 286–310 (NNNNNNNNNNNNNNNNNNNNNNNND) is disordered.

Belongs to the NAD(P)-dependent epimerase/dehydratase family. dTDP-glucose dehydratase subfamily. It depends on NAD(+) as a cofactor.

It catalyses the reaction dTDP-alpha-D-glucose = dTDP-4-dehydro-6-deoxy-alpha-D-glucose + H2O. This is dTDP-D-glucose 4,6-dehydratase (tgds) from Dictyostelium discoideum (Social amoeba).